Consider the following 414-residue polypeptide: Collagenase (414 aa).

This sequence belongs to the peptidase U32 family. As to quaternary structure, homodimer. The cofactor is a metal cation.

Its function is as follows. Has collagenase activity. Hydrolyzes type I collagen. May play a role in virulence. This chain is Collagenase (prtC), found in Porphyromonas gingivalis (strain ATCC BAA-308 / W83).